A 743-amino-acid chain; its full sequence is Ribosome biogenesis protein BOP1 homolog (743 aa).

WD repeat units follow at residues 365–404 (GHTA…LMKR), 575–615 (KFSE…RRFK), 617–655 (SGGV…KPYK), 659–701 (SHKG…DYNK), and 712–743 (KHQR…AWTE).

This sequence belongs to the WD repeat BOP1/ERB1 family.

Its subcellular location is the nucleus. The protein localises to the nucleolus. It is found in the nucleoplasm. Required for maturation of ribosomal RNAs and formation of the large ribosomal subunit. This Leishmania braziliensis protein is Ribosome biogenesis protein BOP1 homolog.